A 168-amino-acid chain; its full sequence is 2-C-methyl-D-erythritol 2,4-cyclodiphosphate synthase (168 aa).

2 residues coordinate a divalent metal cation: aspartate 11 and histidine 13. Residues 11-13 (DVH) and 41-42 (HS) each bind 4-CDP-2-C-methyl-D-erythritol 2-phosphate. Histidine 49 is an a divalent metal cation binding site. Residues 63 to 65 (DIG), 68 to 72 (FPDTD), 139 to 142 (TTTE), phenylalanine 146, and arginine 149 each bind 4-CDP-2-C-methyl-D-erythritol 2-phosphate.

The protein belongs to the IspF family. As to quaternary structure, homotrimer. A divalent metal cation serves as cofactor.

It catalyses the reaction 4-CDP-2-C-methyl-D-erythritol 2-phosphate = 2-C-methyl-D-erythritol 2,4-cyclic diphosphate + CMP. It functions in the pathway isoprenoid biosynthesis; isopentenyl diphosphate biosynthesis via DXP pathway; isopentenyl diphosphate from 1-deoxy-D-xylulose 5-phosphate: step 4/6. Involved in the biosynthesis of isopentenyl diphosphate (IPP) and dimethylallyl diphosphate (DMAPP), two major building blocks of isoprenoid compounds. Catalyzes the conversion of 4-diphosphocytidyl-2-C-methyl-D-erythritol 2-phosphate (CDP-ME2P) to 2-C-methyl-D-erythritol 2,4-cyclodiphosphate (ME-CPP) with a corresponding release of cytidine 5-monophosphate (CMP). The sequence is that of 2-C-methyl-D-erythritol 2,4-cyclodiphosphate synthase from Psychrobacter arcticus (strain DSM 17307 / VKM B-2377 / 273-4).